The chain runs to 1374 residues: DNA-directed RNA polymerase subunit beta (1374 aa).

This sequence belongs to the RNA polymerase beta chain family. As to quaternary structure, the RNAP catalytic core consists of 2 alpha, 1 beta, 1 beta' and 1 omega subunit. When a sigma factor is associated with the core the holoenzyme is formed, which can initiate transcription.

It catalyses the reaction RNA(n) + a ribonucleoside 5'-triphosphate = RNA(n+1) + diphosphate. In terms of biological role, DNA-dependent RNA polymerase catalyzes the transcription of DNA into RNA using the four ribonucleoside triphosphates as substrates. This is DNA-directed RNA polymerase subunit beta from Rhodopseudomonas palustris (strain TIE-1).